The chain runs to 82 residues: Polyferredoxin protein FwdG (82 aa).

4Fe-4S ferredoxin-type domains are found at residues 4-33 and 51-80; these read YELV…PETW and VVTV…LVFK. Positions 13, 16, 19, 23, 60, 63, 66, and 70 each coordinate [4Fe-4S] cluster.

[4Fe-4S] cluster serves as cofactor.

The chain is Polyferredoxin protein FwdG (fwdG) from Methanocaldococcus jannaschii (strain ATCC 43067 / DSM 2661 / JAL-1 / JCM 10045 / NBRC 100440) (Methanococcus jannaschii).